A 467-amino-acid chain; its full sequence is Xanthan biosynthesis protein XanB (467 aa).

This sequence belongs to the mannose-6-phosphate isomerase type 2 family.

The catalysed reaction is D-mannose 6-phosphate = D-fructose 6-phosphate. The enzyme catalyses alpha-D-mannose 1-phosphate + GTP + H(+) = GDP-alpha-D-mannose + diphosphate. It functions in the pathway nucleotide-sugar biosynthesis; GDP-alpha-D-mannose biosynthesis; GDP-alpha-D-mannose from alpha-D-mannose 1-phosphate (GTP route): step 1/1. It participates in nucleotide-sugar biosynthesis; GDP-alpha-D-mannose biosynthesis; alpha-D-mannose 1-phosphate from D-fructose 6-phosphate: step 1/2. Functionally, involved in xanthan production. This chain is Xanthan biosynthesis protein XanB (xanB), found in Xanthomonas campestris pv. campestris (strain B100).